The sequence spans 733 residues: Wall-associated receptor kinase 5 (733 aa).

A signal peptide spans 1-23 (MKVHSLFLMAIFFYLAYTQLVKA). Topologically, residues 24–330 (QPRDDCQTRC…IDTPKEEPKY (307 aa)) are extracellular. N-linked (GlcNAc...) asparagine glycosylation is found at Asn-57, Asn-77, Asn-110, Asn-137, Asn-184, Asn-206, Asn-218, Asn-232, and Asn-247. Positions 231–278 (GNQTCEQVVGRNICGGNSTCFDSTRGKGYNCKCLQGFDGNPYLSDGCQ) constitute an EGF-like 1 domain. Disulfide bonds link Cys-235–Cys-250, Cys-244–Cys-261, Cys-263–Cys-277, Cys-283–Cys-296, Cys-290–Cys-305, and Cys-307–Cys-320. The EGF-like 2; calcium-binding domain maps to 279-321 (DINECTTRIHNCSDTSTCENTLGSFHCQCPSGSDLNTTTMSCI). The N-linked (GlcNAc...) asparagine glycan is linked to Asn-289. A glycan (N-linked (GlcNAc...) asparagine) is linked at Asn-314. The chain crosses the membrane as a helical span at residues 331 to 351 (LGWTTVLLGTTIGFLIILLTI). The Cytoplasmic portion of the chain corresponds to 352 to 733 (SYIQQKMRHR…VTRLDIETGR (382 aa)). Position 397 is a phosphothreonine (Thr-397). In terms of domain architecture, Protein kinase spans 408–691 (YNESRILGQG…RVKTTKHQWS (284 aa)). ATP is bound by residues 414-422 (LGQGGQGTV) and Lys-436. Tyr-481 bears the Phosphotyrosine mark. Asp-533 functions as the Proton acceptor in the catalytic mechanism. A phosphothreonine mark is found at Thr-567 and Thr-572. Phosphotyrosine is present on Tyr-580.

This sequence belongs to the protein kinase superfamily. Ser/Thr protein kinase family. Predominantly expressed in green tissues such as stems and leaves.

Its subcellular location is the membrane. It catalyses the reaction L-seryl-[protein] + ATP = O-phospho-L-seryl-[protein] + ADP + H(+). It carries out the reaction L-threonyl-[protein] + ATP = O-phospho-L-threonyl-[protein] + ADP + H(+). Functionally, serine/threonine-protein kinase that may function as a signaling receptor of extracellular matrix component. Binding to pectin may have significance in the control of cell expansion, morphogenesis and development. The sequence is that of Wall-associated receptor kinase 5 (WAK5) from Arabidopsis thaliana (Mouse-ear cress).